We begin with the raw amino-acid sequence, 293 residues long: 4-hydroxybenzoate octaprenyltransferase (293 aa).

7 consecutive transmembrane segments (helical) span residues 25-45, 48-68, 101-121, 142-162, 165-185, 223-243, and 271-291; these read IGNF…AKGL, LKVL…GCVI, LFVV…PLTI, HFPQ…AFAA, GAVA…ATIY, VMLA…FWYL, and FLNN…DLHL.

This sequence belongs to the UbiA prenyltransferase family. Mg(2+) serves as cofactor.

Its subcellular location is the cell inner membrane. It carries out the reaction all-trans-octaprenyl diphosphate + 4-hydroxybenzoate = 4-hydroxy-3-(all-trans-octaprenyl)benzoate + diphosphate. The protein operates within cofactor biosynthesis; ubiquinone biosynthesis. Its function is as follows. Catalyzes the prenylation of para-hydroxybenzoate (PHB) with an all-trans polyprenyl group. Mediates the second step in the final reaction sequence of ubiquinone-8 (UQ-8) biosynthesis, which is the condensation of the polyisoprenoid side chain with PHB, generating the first membrane-bound Q intermediate 3-octaprenyl-4-hydroxybenzoate. In Alkalilimnicola ehrlichii (strain ATCC BAA-1101 / DSM 17681 / MLHE-1), this protein is 4-hydroxybenzoate octaprenyltransferase.